The primary structure comprises 225 residues: Endonuclease V (225 aa).

Mg(2+) contacts are provided by D43 and D110.

The protein belongs to the endonuclease V family. Mg(2+) serves as cofactor.

It localises to the cytoplasm. The catalysed reaction is Endonucleolytic cleavage at apurinic or apyrimidinic sites to products with a 5'-phosphate.. Its function is as follows. DNA repair enzyme involved in the repair of deaminated bases. Selectively cleaves double-stranded DNA at the second phosphodiester bond 3' to a deoxyinosine leaving behind the intact lesion on the nicked DNA. This chain is Endonuclease V, found in Thermotoga petrophila (strain ATCC BAA-488 / DSM 13995 / JCM 10881 / RKU-1).